The chain runs to 628 residues: Glutamine--fructose-6-phosphate aminotransferase [isomerizing] (628 aa).

Catalysis depends on C2, which acts as the Nucleophile; for GATase activity. One can recognise a Glutamine amidotransferase type-2 domain in the interval 2–229; the sequence is CGIVGYVGHR…QDQAVVLTAD (228 aa). The segment at 61–94 is disordered; that stretch reads ETDSNDGDGLGGSTGLGHTRWATHGRPTDRNAHP. SIS domains follow at residues 301–440 and 473–618; these read SDQE…ARGT and LAER…VDKP. The For Fru-6P isomerization activity role is filled by K623.

As to quaternary structure, homodimer.

The protein localises to the cytoplasm. It catalyses the reaction D-fructose 6-phosphate + L-glutamine = D-glucosamine 6-phosphate + L-glutamate. In terms of biological role, catalyzes the first step in hexosamine metabolism, converting fructose-6P into glucosamine-6P using glutamine as a nitrogen source. This chain is Glutamine--fructose-6-phosphate aminotransferase [isomerizing], found in Mycolicibacterium smegmatis (strain ATCC 700084 / mc(2)155) (Mycobacterium smegmatis).